Consider the following 187-residue polypeptide: F-box protein At5g41720 (187 aa).

Residues 2–49 (MMNSPLDYDVLLEIMSYCPATEMAKFRLLSKECNKRSYEMSFINRHLH) enclose the F-box domain.

In Arabidopsis thaliana (Mouse-ear cress), this protein is F-box protein At5g41720.